The sequence spans 76 residues: Monocarboxylate transporter 1 (76 aa).

The next 3 helical transmembrane spans lie at Leu1 to Ala18, Ile28 to Leu48, and Ile53 to Leu73. Residue Asp8 coordinates H(+). Arg12 contributes to the (S)-lactate binding site.

The protein belongs to the major facilitator superfamily. Monocarboxylate porter (TC 2.A.1.13) family. Interacts with BSG; interaction mediates SLC16A1 targeting to the plasma membrane. Interacts with EMB; interaction mediates SLC16A1 targeting to the plasma membrane.

Its subcellular location is the cell membrane. The protein localises to the basolateral cell membrane. The protein resides in the apical cell membrane. It carries out the reaction (S)-lactate(in) + H(+)(in) = (S)-lactate(out) + H(+)(out). It catalyses the reaction acetate(out) + H(+)(out) = acetate(in) + H(+)(in). The catalysed reaction is acetoacetate(out) + H(+)(out) = acetoacetate(in) + H(+)(in). The enzyme catalyses pyruvate(out) + H(+)(out) = pyruvate(in) + H(+)(in). It carries out the reaction (R)-3-hydroxybutanoate(out) + H(+)(out) = (R)-3-hydroxybutanoate(in) + H(+)(in). It catalyses the reaction 3-methyl-2-oxobutanoate(out) + H(+)(out) = 3-methyl-2-oxobutanoate(in) + H(+)(in). The catalysed reaction is 4-methyl-2-oxopentanoate(out) + H(+)(out) = 4-methyl-2-oxopentanoate(in) + H(+)(in). The enzyme catalyses succinate(in) + 2 H(+)(in) = succinate(out) + 2 H(+)(out). Bidirectional proton-coupled monocarboxylate transporter. Catalyzes the rapid transport across the plasma membrane of many monocarboxylates such as lactate, pyruvate, acetate and the ketone bodies acetoacetate and beta-hydroxybutyrate, and thus contributes to the maintenance of intracellular pH. The transport direction is determined by the proton motive force and the concentration gradient of the substrate monocarboxylate. MCT1 is a major lactate exporter. Plays a role in cellular responses to a high-fat diet by modulating the cellular levels of lactate and pyruvate that contribute to the regulation of central metabolic pathways and insulin secretion, with concomitant effects on plasma insulin levels and blood glucose homeostasis. Facilitates the protonated monocarboxylate form of succinate export, that its transient protonation upon muscle cell acidification in exercising muscle and ischemic heart. Functions via alternate outward- and inward-open conformation states. Protonation and deprotonation is essential for the conformational transition. The chain is Monocarboxylate transporter 1 (SLC16A1) from Meriones unguiculatus (Mongolian jird).